Here is a 133-residue protein sequence, read N- to C-terminus: MANHDPISDMLTRIRNASEKRHQTTRVPASRMSRSIAKVLQQEGFISEISEEGEGVRTHLVLELKYSGKHRHPTIRSMQRVSKPGLRIYKNTRALPKVLGGLGMAIISTSKGVMSDRDARKQGVGGEVLCYVY.

This sequence belongs to the universal ribosomal protein uS8 family. In terms of assembly, part of the 30S ribosomal subunit. Contacts proteins S5 and S12.

Its function is as follows. One of the primary rRNA binding proteins, it binds directly to 16S rRNA central domain where it helps coordinate assembly of the platform of the 30S subunit. This chain is Small ribosomal subunit protein uS8, found in Prochlorococcus marinus (strain MIT 9313).